Reading from the N-terminus, the 362-residue chain is Protein RecA (362 aa).

Residue 77-84 (GPESSGKT) participates in ATP binding.

This sequence belongs to the RecA family.

It is found in the cytoplasm. Its function is as follows. Can catalyze the hydrolysis of ATP in the presence of single-stranded DNA, the ATP-dependent uptake of single-stranded DNA by duplex DNA, and the ATP-dependent hybridization of homologous single-stranded DNAs. It interacts with LexA causing its activation and leading to its autocatalytic cleavage. The sequence is that of Protein RecA from Rhizobium leguminosarum bv. trifolii (strain WSM2304).